Consider the following 618-residue polypeptide: Serine/threonine-protein kinase pkn1 (618 aa).

Residues 15–381 form the Protein kinase domain; the sequence is YKILCYLRKG…KEEVKPQPLF (367 aa). Residues 21–29 and Lys44 each bind ATP; that span reads LRKGLWCQD.

It belongs to the protein kinase superfamily. Ser/Thr protein kinase family. In terms of processing, autophosphorylated on serine and threonine residues.

It catalyses the reaction L-seryl-[protein] + ATP = O-phospho-L-seryl-[protein] + ADP + H(+). The enzyme catalyses L-threonyl-[protein] + ATP = O-phospho-L-threonyl-[protein] + ADP + H(+). Functionally, together with the serine/threonine kinase PknD, may play a role in the specific interactions with host proteins during intracellular growth. The chain is Serine/threonine-protein kinase pkn1 (pkn1) from Chlamydia caviae (strain ATCC VR-813 / DSM 19441 / 03DC25 / GPIC) (Chlamydophila caviae).